The primary structure comprises 288 residues: Probable aquaporin PIP1-2 (288 aa).

The segment at 1 to 37 (MEGKEEDVRLGANKFSERQPIGTAAQGSDDKDYKEPP) is disordered. The next 2 helical transmembrane spans lie at 57–77 (IAEF…VMGV) and 92–114 (IAWS…SGGH). Positions 116–118 (NPA) match the NPA 1 motif. The next 3 membrane-spanning stretches (helical) occupy residues 135-155 (LFYM…VKGF), 177-197 (GDGL…VFSA), and 211-231 (ILAP…TIPI). Positions 237–239 (NPA) match the NPA 2 motif. The chain crosses the membrane as a helical span at residues 259-279 (IFWVGPFIGAALAAIYHQVVI).

The protein belongs to the MIP/aquaporin (TC 1.A.8) family. PIP (TC 1.A.8.11) subfamily. As to expression, expressed in roots, leaves and anthers.

The protein localises to the cell membrane. In terms of biological role, aquaporins facilitate the transport of water and small neutral solutes across cell membranes. In Oryza sativa subsp. japonica (Rice), this protein is Probable aquaporin PIP1-2 (PIP1-2).